The sequence spans 431 residues: Female gametocyte surface protein P47 (431 aa).

Residues 1–20 (MKGFTGASIIVFYLIKGYLS) form the signal peptide. One can recognise a 6-Cys 1 domain in the interval 26–178 (NGYVCDFKFN…GLVKIILNNQ (153 aa)). 3 disulfide bridges follow: cysteine 30-cysteine 55, cysteine 70-cysteine 145, and cysteine 88-cysteine 143. Residue asparagine 45 is glycosylated (N-linked (GlcNAc...) asparagine). Asparagine 239 is a glycosylation site (N-linked (GlcNAc...) asparagine). A 6-Cys 2 domain is found at 278-413 (NIDGCDFTVP…MELKISSSKN (136 aa)). 3 cysteine pairs are disulfide-bonded: cysteine 282–cysteine 309, cysteine 326–cysteine 395, and cysteine 335–cysteine 393. Serine 409 is lipidated: GPI-anchor amidated serine. Positions 410–431 (SSKNIFISFILLSIIVSIFYLF) are cleaved as a propeptide — removed in mature form.

The protein localises to the cell surface. The protein resides in the cell membrane. Required for female fertility. The protein is Female gametocyte surface protein P47 (PB47) of Plasmodium berghei (strain Anka).